The primary structure comprises 245 residues: DNA repair protein RecO (245 aa).

The protein belongs to the RecO family.

In terms of biological role, involved in DNA repair and RecF pathway recombination. The sequence is that of DNA repair protein RecO from Bartonella bacilliformis (strain ATCC 35685 / KC583 / Herrer 020/F12,63).